Here is a 291-residue protein sequence, read N- to C-terminus: Lysosomal amino acid transporter 1 homolog (291 aa).

The Lumenal portion of the chain corresponds to 1–37 (MVWKKLGSRNFSSCPSGSIQWIWDVLGECAQDGWDEA). A glycan (N-linked (GlcNAc...) asparagine) is linked at N10. The 67-residue stretch at 34–100 (WDEASVGLGL…LADQLPLQTY (67 aa)) folds into the PQ-loop 1 domain. The chain crosses the membrane as a helical span at residues 38 to 58 (SVGLGLISILCFAASTFPQFI). At 59 to 71 (KAYKTGNMDQALS) the chain is on the cytoplasmic side. The helical transmembrane segment at 72 to 92 (LWFLLGWIGGDSCNLIGSFLA) threads the bilayer. At 93 to 98 (DQLPLQ) the chain is on the lumenal side. A helical transmembrane segment spans residues 99–119 (TYTAVYYVLADLVMLTLYFYY). The Cytoplasmic segment spans residues 120–134 (KFRTRPSLLSAPINS). A helical transmembrane segment spans residues 135 to 155 (VLLFLMGMACATPLLSAAGPV). The Lumenal segment spans residues 156–182 (AAPREAFRGRALLSVESGSKPFTRQEV). A helical transmembrane segment spans residues 183-203 (IGFVIGSISSVLYLLSRLPQI). The region spanning 184 to 243 (GFVIGSISSVLYLLSRLPQIRTNFLRKSTQGISYSLFALVMLGNTLYGLSVLLKNPEEGQ) is the PQ-loop 2 domain. Residues 204–214 (RTNFLRKSTQG) lie on the Cytoplasmic side of the membrane. A helical membrane pass occupies residues 215–235 (ISYSLFALVMLGNTLYGLSVL). The Lumenal portion of the chain corresponds to 236 to 254 (LKNPEEGQSEGSYLLHHLP). The chain crosses the membrane as a helical span at residues 255–275 (WLVGSLGVLLLDTIISIQFLV). The Cytoplasmic portion of the chain corresponds to 276–291 (YRRSTAASELEPLLPS). The Di-leucine motif signature appears at 288-289 (LL).

This sequence belongs to the laat-1 family.

It is found in the lysosome membrane. Amino acid transporter that specifically mediates the pH-dependent export of the cationic amino acids arginine, histidine and lysine from lysosomes. This is Lysosomal amino acid transporter 1 homolog from Homo sapiens (Human).